The sequence spans 436 residues: Methylenetetrahydrofolate--tRNA-(uracil-5-)-methyltransferase TrmFO (436 aa).

Residue 7 to 12 (GAGLAG) participates in FAD binding.

This sequence belongs to the MnmG family. TrmFO subfamily. It depends on FAD as a cofactor.

The protein localises to the cytoplasm. It carries out the reaction uridine(54) in tRNA + (6R)-5,10-methylene-5,6,7,8-tetrahydrofolate + NADH + H(+) = 5-methyluridine(54) in tRNA + (6S)-5,6,7,8-tetrahydrofolate + NAD(+). The catalysed reaction is uridine(54) in tRNA + (6R)-5,10-methylene-5,6,7,8-tetrahydrofolate + NADPH + H(+) = 5-methyluridine(54) in tRNA + (6S)-5,6,7,8-tetrahydrofolate + NADP(+). Functionally, catalyzes the folate-dependent formation of 5-methyl-uridine at position 54 (M-5-U54) in all tRNAs. This chain is Methylenetetrahydrofolate--tRNA-(uracil-5-)-methyltransferase TrmFO, found in Caldicellulosiruptor bescii (strain ATCC BAA-1888 / DSM 6725 / KCTC 15123 / Z-1320) (Anaerocellum thermophilum).